The sequence spans 74 residues: Defensin-like protein P322 (74 aa).

The signal sequence occupies residues 1 to 19 (MRFFATFFLLAMLVVATKM). Cystine bridges form between C30–C74, C41–C61, C47–C68, and C51–C70.

This sequence belongs to the DEFL family. Protease inhibitor I18 (RTI/MTI-2) subfamily. As to expression, tuber.

It localises to the secreted. In Solanum tuberosum (Potato), this protein is Defensin-like protein P322.